The chain runs to 1115 residues: DNA-directed RNA polymerase subunit beta (1115 aa).

Residues 1084 to 1115 (HEAGEGEDDEYFEEDEEAVDDEPMTFDDDDME) form a disordered region. A compositionally biased stretch (acidic residues) spans 1088–1115 (EGEDDEYFEEDEEAVDDEPMTFDDDDME).

It belongs to the RNA polymerase beta chain family. The RNAP catalytic core consists of 2 alpha, 1 beta, 1 beta' and 1 omega subunit. When a sigma factor is associated with the core the holoenzyme is formed, which can initiate transcription.

The catalysed reaction is RNA(n) + a ribonucleoside 5'-triphosphate = RNA(n+1) + diphosphate. DNA-dependent RNA polymerase catalyzes the transcription of DNA into RNA using the four ribonucleoside triphosphates as substrates. The chain is DNA-directed RNA polymerase subunit beta from Desulfitobacterium hafniense (strain Y51).